The sequence spans 548 residues: Telomerase Cajal body protein 1 (548 aa).

Residues 1 to 142 (MKTLETQPLA…SGEPAAEDEG (142 aa)) are disordered. Positions 15-31 (PSDQDPAPAHPSPHASP) are enriched in low complexity. Phosphoserine occurs at positions 26, 30, and 54. Phosphoserine; by ATM is present on Ser-64. Phosphoserine is present on residues Ser-85, Ser-90, Ser-112, and Ser-114. WD repeat units lie at residues 167 to 206 (QPEN…YHEG), 222 to 267 (EGDT…LRAS), 272 to 313 (NHLD…RDCE), 323 to 364 (GQSG…ALLG), 365 to 405 (GHQG…YPLW), and 411 to 450 (VTTN…NDGK). Thr-489 is modified (phosphothreonine). Ser-491 carries the phosphoserine modification. The disordered stretch occupies residues 526 to 548 (SIPDDHQGEKGQGGTEGGVGELI). Over residues 535–548 (KGQGGTEGGVGELI) the composition is skewed to gly residues.

It belongs to the TCAB1 family. As to quaternary structure, component of the telomerase holoenzyme complex composed of one molecule of TERT, one molecule of WRAP53/TCAB1, two molecules of H/ACA ribonucleoprotein complex subunits DKC1, NOP10, NHP2 and GAR1, and a telomerase RNA template component (TERC). The telomerase holoenzyme complex is associated with TEP1, SMG6/EST1A and POT1. Interacts with the chaperonin-containing T-complex (TRiC) complex; which mediates the folding of WRAP53/TCAB1. Interacts with COIL. Interacts with SMN1. Interacts with RNF8. Interacts with histone H2AX. Post-translationally, phosphorylated at Ser-64 by ATM in response to DNA damage, promoting its interaction with histone H2AX and localization to sites of DNA double-strand breaks. As to expression, expressed in all tissues and cell lines examined.

It localises to the nucleus. The protein localises to the cajal body. Its subcellular location is the chromosome. It is found in the telomere. RNA chaperone that plays a key role in telomere maintenance and RNA localization to Cajal bodies. Specifically recognizes and binds the Cajal body box (CAB box) present in both small Cajal body RNAs (scaRNAs) and telomerase RNA template component (TERC). Essential component of the telomerase holoenzyme complex, a ribonucleoprotein complex essential for the replication of chromosome termini that elongates telomeres in most eukaryotes. In the telomerase holoenzyme complex, required to stimulate the catalytic activity of the complex. Acts by specifically binding the CAB box of the TERC RNA and controlling the folding of the CR4/CR5 region of the TERC RNA, a critical step for telomerase activity. In addition, also controls telomerase holoenzyme complex localization to Cajal body. During S phase, required for delivery of TERC to telomeres during S phase and for telomerase activity. In addition to its role in telomere maintenance, also required for Cajal body formation, probably by mediating localization of scaRNAs to Cajal bodies. Also plays a role in DNA repair: phosphorylated by ATM in response to DNA damage and relocalizes to sites of DNA double-strand breaks to promote the repair of DNA double-strand breaks. Acts by recruiting the ubiquitin ligase RNF8 to DNA breaks and promote both homologous recombination (HR) and non-homologous end joining (NHEJ). The chain is Telomerase Cajal body protein 1 from Homo sapiens (Human).